Consider the following 435-residue polypeptide: Citrate synthase (435 aa).

Active-site residues include His-311 and Asp-370.

The protein belongs to the citrate synthase family.

It catalyses the reaction oxaloacetate + acetyl-CoA + H2O = citrate + CoA + H(+). It participates in carbohydrate metabolism; tricarboxylic acid cycle; isocitrate from oxaloacetate: step 1/2. The protein is Citrate synthase (gltA) of Rickettsia slovaca (strain 13-B).